We begin with the raw amino-acid sequence, 191 residues long: Protein YceI (191 aa).

Residues 1-22 (MKKNLLGFTLASLLFTTGSAVA) form the signal peptide.

It belongs to the UPF0312 family. Type 1 subfamily.

The protein localises to the periplasm. The polypeptide is Protein YceI (Salmonella newport (strain SL254)).